A 1468-amino-acid chain; its full sequence is Potassium channel K2 (1468 aa).

6 helical membrane passes run 48 to 68 (MIYI…YWIY), 146 to 165 (FNCY…WYIS), 185 to 209 (IYIY…IISY), 221 to 240 (LLID…RHFF), 246 to 264 (IDIY…FLNV), and 285 to 306 (IILG…IQGI). Positions 326-344 (YFYFSIISISTVGYGDIIP) form an intramembrane region, pore-forming. A helical transmembrane segment spans residues 351–368 (VICIFFIFWTFIWVPIQF). Residues 804 to 823 (TCARTNESHKNNRLRSRRSQ) are disordered. Residues 814-823 (NNRLRSRRSQ) show a composition bias toward basic residues. Positions 1141–1185 (KSNKNSNNNNKCEQIKQLNNNLTFKKNEKKTKSNKQNTNDTLERR) form a coiled coil.

It localises to the membrane. Its function is as follows. May be involved in transmembrane potassium transport at the subcellular level not affecting bulk potassium transport across the plasma membrane. The chain is Potassium channel K2 from Plasmodium berghei (strain Anka).